A 442-amino-acid chain; its full sequence is Endothelin receptor type B (442 aa).

The signal sequence occupies residues 1-26 (MQPPPSLCGRALVALVLACGLSRIWG). Residues 27–101 (EERGFPPDRA…GSIEIKETFK (75 aa)) lie on the Extracellular side of the membrane. Residue asparagine 59 is glycosylated (N-linked (GlcNAc...) asparagine). The tract at residues 69–88 (AEVPKGDRTAGSPPRTISPP) is disordered. The helical transmembrane segment at 102–126 (YINTVVSCLVFVLGIIGNSTLLRII) threads the bilayer. Residues 127–137 (YKNKCMRNGPN) lie on the Cytoplasmic side of the membrane. The chain crosses the membrane as a helical span at residues 138–163 (ILIASLALGDLLHIIIDIPITVYKLL). Over 164 to 175 (AEDWPFGVEMCK) the chain is Extracellular. A disulfide bridge connects residues cysteine 174 and cysteine 255. The helical transmembrane segment at 176-197 (LVPFIQKASVGITVLSLCALSI) threads the bilayer. Over 198–218 (DRYRAVASWSRIKGIGVPKWT) the chain is Cytoplasmic. Residues 219–243 (AVEIVLIWVVSVVLAVPEAVGFDMI) traverse the membrane as a helical segment. Residues 244–271 (TIDYKGRYLRICLLHPTQKTAFMQFYKT) lie on the Extracellular side of the membrane. Residues 272-296 (AKDWWLFSFYFCLPLAITAFFYTLM) form a helical membrane-spanning segment. Residues 297–324 (TCEMLRKKSGMQIALNDHLKQRREVAKT) are Cytoplasmic-facing. The residue at position 305 (serine 305) is a Phosphoserine. Residues 325 to 350 (VFCLVLVFALCWLPLHLSRILKLTIY) traverse the membrane as a helical segment. Residues 351–362 (DQNDPNRCELLS) lie on the Extracellular side of the membrane. Residues 363–389 (FLLVLDYIGINMASLNSCINPIALYLV) form a helical membrane-spanning segment. The Cytoplasmic portion of the chain corresponds to 390-442 (SKRFKNCFKSCLCCWCQSFEEKQSLEEKQSCLKFKANDHGYDNFRSSNKYSSS). S-palmitoyl cysteine attachment occurs at residues cysteine 402, cysteine 403, and cysteine 405. Position 419 is a phosphoserine (serine 419). Position 439 is a phosphotyrosine (tyrosine 439). Residues serine 440, serine 441, and serine 442 each carry the phosphoserine modification.

Belongs to the G-protein coupled receptor 1 family. Endothelin receptor subfamily. EDNRB sub-subfamily.

It localises to the cell membrane. In terms of biological role, non-specific receptor for endothelin 1, 2, and 3. Mediates its action by association with G proteins that activate a phosphatidylinositol-calcium second messenger system. This Canis lupus familiaris (Dog) protein is Endothelin receptor type B (EDNRB).